The sequence spans 255 residues: Pimeloyl-[acyl-carrier protein] methyl ester esterase (255 aa).

The 227-residue stretch at 16–242 (LVLLHGWGMN…SSHAPFITEP (227 aa)) folds into the AB hydrolase-1 domain. Substrate is bound by residues W22, 82 to 83 (SL), and 143 to 147 (FMALQ). The Nucleophile role is filled by S82. Catalysis depends on residues D207 and H235. Residue H235 participates in substrate binding.

This sequence belongs to the AB hydrolase superfamily. Carboxylesterase BioH family. As to quaternary structure, monomer.

Its subcellular location is the cytoplasm. It catalyses the reaction 6-carboxyhexanoyl-[ACP] methyl ester + H2O = 6-carboxyhexanoyl-[ACP] + methanol + H(+). The protein operates within cofactor biosynthesis; biotin biosynthesis. Its function is as follows. The physiological role of BioH is to remove the methyl group introduced by BioC when the pimeloyl moiety is complete. It allows to synthesize pimeloyl-ACP via the fatty acid synthetic pathway through the hydrolysis of the ester bonds of pimeloyl-ACP esters. The sequence is that of Pimeloyl-[acyl-carrier protein] methyl ester esterase from Vibrio vulnificus (strain CMCP6).